Consider the following 65-residue polypeptide: Large ribosomal subunit protein bL35 (65 aa).

Positions M1–T46 are disordered. The segment covering K21 to L44 has biased composition (basic residues).

It belongs to the bacterial ribosomal protein bL35 family.

In Gloeobacter violaceus (strain ATCC 29082 / PCC 7421), this protein is Large ribosomal subunit protein bL35.